A 108-amino-acid polypeptide reads, in one-letter code: FK506-binding protein 1 (108 aa).

Residues 20–108 (GDSVTIHYVG…KFEVELLKIN (89 aa)) enclose the PPIase FKBP-type domain.

The protein belongs to the FKBP-type PPIase family. FKBP1 subfamily.

The protein localises to the cytoplasm. The enzyme catalyses [protein]-peptidylproline (omega=180) = [protein]-peptidylproline (omega=0). Its activity is regulated as follows. Inhibited by both FK506 and rapamycin. In terms of biological role, PPIases accelerate the folding of proteins. It catalyzes the cis-trans isomerization of proline imidic peptide bonds in oligopeptides. This chain is FK506-binding protein 1 (FPR1), found in Cryptococcus neoformans var. neoformans serotype D (strain JEC21 / ATCC MYA-565) (Filobasidiella neoformans).